Consider the following 180-residue polypeptide: ATP synthase subunit b (180 aa).

Residues Ser26–Gly48 form a helical membrane-spanning segment.

Belongs to the ATPase B chain family. F-type ATPases have 2 components, F(1) - the catalytic core - and F(0) - the membrane proton channel. F(1) has five subunits: alpha(3), beta(3), gamma(1), delta(1), epsilon(1). F(0) has three main subunits: a(1), b(2) and c(10-14). The alpha and beta chains form an alternating ring which encloses part of the gamma chain. F(1) is attached to F(0) by a central stalk formed by the gamma and epsilon chains, while a peripheral stalk is formed by the delta and b chains.

The protein localises to the cell inner membrane. F(1)F(0) ATP synthase produces ATP from ADP in the presence of a proton or sodium gradient. F-type ATPases consist of two structural domains, F(1) containing the extramembraneous catalytic core and F(0) containing the membrane proton channel, linked together by a central stalk and a peripheral stalk. During catalysis, ATP synthesis in the catalytic domain of F(1) is coupled via a rotary mechanism of the central stalk subunits to proton translocation. In terms of biological role, component of the F(0) channel, it forms part of the peripheral stalk, linking F(1) to F(0). The polypeptide is ATP synthase subunit b (Sulfurihydrogenibium sp. (strain YO3AOP1)).